The chain runs to 335 residues: Dye-decolorizing peroxidase (335 aa).

Aspartate 149 functions as the Proton acceptor in the catalytic mechanism. Residue histidine 222 coordinates heme. Residues 312–335 (LPQAATPTLAAGSLSIGSLKGSPR) form a targeting peptide region.

This sequence belongs to the DyP-type peroxidase family. In terms of assembly, homotetramer, presumably also in the encapsulin nanocompartment. Heme b is required as a cofactor.

The protein localises to the encapsulin nanocompartment. It catalyses the reaction 2 a phenolic donor + H2O2 = 2 a phenolic radical donor + 2 H2O. Functionally, cargo of a type 1 encapsulin nanocompartment in situ; this cargo protects against oxidative stress at low pH. When expressed in the cytoplasm (absence of the encapsulin shell gene) it is almost as protective as the intact nanocompartment; its encapsulation has a modest yet significant effect on protection against oxidative stress at low pH. A heme-dependent peroxidase, it probably does not have deferrochelatase activity. Converts guaiacol and H2O2 to tetraguaiacol, also acts on 2,2'-azino-bis(3-ethylbenzothiazoline-6-sulfonic acid) (ABTS). Retains peroxidase activity when encapsulated but has a reduced set of substrates; acts on ABTS but not guaiacol. This is Dye-decolorizing peroxidase from Mycobacterium tuberculosis (strain ATCC 25618 / H37Rv).